The sequence spans 121 residues: uncharacterized protein (121 aa).

2 disordered regions span residues 1-28 (MGCASAKHVATVQNEEEAQRGKSYQNGD) and 60-81 (QENLEKSASSNTRLKTNKEIPG). A phosphoserine mark is found at Ser-95 and Ser-115.

This is an uncharacterized protein from Mus musculus (Mouse).